A 308-amino-acid polypeptide reads, in one-letter code: Phosphoribosylaminoimidazole-succinocarboxamide synthase (308 aa).

This sequence belongs to the SAICAR synthetase family.

It carries out the reaction 5-amino-1-(5-phospho-D-ribosyl)imidazole-4-carboxylate + L-aspartate + ATP = (2S)-2-[5-amino-1-(5-phospho-beta-D-ribosyl)imidazole-4-carboxamido]succinate + ADP + phosphate + 2 H(+). It functions in the pathway purine metabolism; IMP biosynthesis via de novo pathway; 5-amino-1-(5-phospho-D-ribosyl)imidazole-4-carboxamide from 5-amino-1-(5-phospho-D-ribosyl)imidazole-4-carboxylate: step 1/2. In Xanthomonas euvesicatoria pv. vesicatoria (strain 85-10) (Xanthomonas campestris pv. vesicatoria), this protein is Phosphoribosylaminoimidazole-succinocarboxamide synthase.